The primary structure comprises 1137 residues: Phytochrome C (1137 aa).

The span at 1 to 18 (MSSSRSNNRATCSRSSSA) shows a compositional bias: low complexity. A disordered region spans residues 1–27 (MSSSRSNNRATCSRSSSARSKHSARVV). One can recognise a GAF domain in the interval 217-400 (NLSLLCDVLV…VFGIQINKEV (184 aa)). Residue Cys322 participates in phytochromobilin binding. 2 PAS domains span residues 620 to 690 (VTNE…LQGI) and 750 to 824 (IQGD…TKLS). One can recognise a Histidine kinase domain in the interval 904–1124 (YIRQELRNPL…IVLVEFPVAQ (221 aa)).

It belongs to the phytochrome family. Homodimer. Post-translationally, contains one covalently linked phytochromobilin chromophore.

In terms of biological role, regulatory photoreceptor which exists in two forms that are reversibly interconvertible by light: the Pr form that absorbs maximally in the red region of the spectrum and the Pfr form that absorbs maximally in the far-red region. Photoconversion of Pr to Pfr induces an array of morphogenic responses, whereas reconversion of Pfr to Pr cancels the induction of those responses. Pfr controls the expression of a number of nuclear genes including those encoding the small subunit of ribulose-bisphosphate carboxylase, chlorophyll A/B binding protein, protochlorophyllide reductase, rRNA, etc. It also controls the expression of its own gene(s) in a negative feedback fashion. This is Phytochrome C (PHYC) from Oryza sativa subsp. japonica (Rice).